Here is a 540-residue protein sequence, read N- to C-terminus: Alanine aminotransferase 2, mitochondrial (540 aa).

Residues 1–46 (MRRFLINQAKGLVDHSRRQHHHKSPSFLSPQPRPLASSPPALSRFF) constitute a mitochondrion transit peptide. Residues 11–40 (GLVDHSRRQHHHKSPSFLSPQPRPLASSPP) are disordered. Over residues 28–40 (LSPQPRPLASSPP) the composition is skewed to low complexity. Lys-357 carries the post-translational modification N6-(pyridoxal phosphate)lysine.

This sequence belongs to the class-I pyridoxal-phosphate-dependent aminotransferase family. Alanine aminotransferase subfamily. Homodimer. The cofactor is pyridoxal 5'-phosphate. In terms of processing, the N-terminus is blocked. As to expression, expressed in shoots, essentially in leaves and flowers, mostly in vascular tissues. Also detected in stems and roots.

It localises to the mitochondrion. It carries out the reaction L-alanine + 2-oxoglutarate = pyruvate + L-glutamate. Its pathway is photosynthesis; C4 acid pathway. The protein operates within amino-acid degradation; L-alanine degradation via transaminase pathway; pyruvate from L-alanine: step 1/1. This chain is Alanine aminotransferase 2, mitochondrial (ALAAT2), found in Arabidopsis thaliana (Mouse-ear cress).